A 426-amino-acid polypeptide reads, in one-letter code: O-methyltransferase pyvH (426 aa).

Residues 258 to 259 (GG), Asp281, 308 to 309 (DF), and Arg323 contribute to the S-adenosyl-L-methionine site. His327 functions as the Proton acceptor in the catalytic mechanism.

It belongs to the class I-like SAM-binding methyltransferase superfamily. Cation-independent O-methyltransferase family.

The protein operates within secondary metabolite biosynthesis. O-methyltransferase; part of the gene cluster that mediates the biosynthesis of pyranoviolin A, a pyranonigrin analog with a C-3 methoxy group. Initially, the PKS portion of pyvA synthesizes C-10 carbon chain from 5 molecules of malonyl-CoA, which is then condensed with the thiolation (T) domain-bound glycine activated by the adenylation (A) domain. The subsequent chain release by Dieckmann condensation (DKC) could be catalyzed by the TE domain present at the C-terminus of pyvA and/or the alpha/beta hydrolase pyvD, installing the tetramic acid moiety. The FAD-dependent monooxygenase pyvC next epoxidizes one of the olefins of the polyketide part, and the epoxide ring-opening induces the dihydro-gamma-pyrone ring formation. The cytochrome P450 monooxygeanse pyvB would be responsible for the 2 consecutive reactions, in which the dihydro-gamma-pyrone is oxidized to gamma-pyrone and C-7 is hydroxylated to yield pyranonigrin F. Finally, the O-methyltransferase pyvH methylates the C-3 hydroxy group to complete the biosynthesis. This Aspergillus violaceofuscus (strain CBS 115571) protein is O-methyltransferase pyvH.